The primary structure comprises 240 residues: Biosynthetic peptidoglycan transglycosylase (240 aa).

A helical membrane pass occupies residues 27–47; that stretch reads VVLLFFFAVFALLLIFRFVPI.

This sequence belongs to the glycosyltransferase 51 family.

It localises to the cell inner membrane. It carries out the reaction [GlcNAc-(1-&gt;4)-Mur2Ac(oyl-L-Ala-gamma-D-Glu-L-Lys-D-Ala-D-Ala)](n)-di-trans,octa-cis-undecaprenyl diphosphate + beta-D-GlcNAc-(1-&gt;4)-Mur2Ac(oyl-L-Ala-gamma-D-Glu-L-Lys-D-Ala-D-Ala)-di-trans,octa-cis-undecaprenyl diphosphate = [GlcNAc-(1-&gt;4)-Mur2Ac(oyl-L-Ala-gamma-D-Glu-L-Lys-D-Ala-D-Ala)](n+1)-di-trans,octa-cis-undecaprenyl diphosphate + di-trans,octa-cis-undecaprenyl diphosphate + H(+). It participates in cell wall biogenesis; peptidoglycan biosynthesis. Functionally, peptidoglycan polymerase that catalyzes glycan chain elongation from lipid-linked precursors. The protein is Biosynthetic peptidoglycan transglycosylase of Haemophilus influenzae (strain PittEE).